The chain runs to 379 residues: L-lactate dehydrogenase (379 aa).

Residues Met1–Pro379 enclose the FMN hydroxy acid dehydrogenase domain. Residue Tyr24 coordinates substrate. 2 residues coordinate FMN: Ser106 and Gln127. Substrate is bound at residue Tyr129. Thr155 is a binding site for FMN. Substrate is bound at residue Arg164. Residue Lys251 participates in FMN binding. The active-site Proton acceptor is the His275. Arg278 contacts substrate. Asp306–Arg330 lines the FMN pocket.

This sequence belongs to the FMN-dependent alpha-hydroxy acid dehydrogenase family. It depends on FMN as a cofactor.

It is found in the cell inner membrane. It catalyses the reaction (S)-lactate + A = pyruvate + AH2. In terms of biological role, catalyzes the conversion of L-lactate to pyruvate. Is coupled to the respiratory chain. This is L-lactate dehydrogenase from Vibrio parahaemolyticus serotype O3:K6 (strain RIMD 2210633).